The primary structure comprises 158 residues: Transcriptional regulator MraZ (158 aa).

2 SpoVT-AbrB domains span residues Ile5–Ser52 and Ala91–Glu134.

It belongs to the MraZ family. In terms of assembly, forms oligomers.

Its subcellular location is the cytoplasm. The protein localises to the nucleoid. The sequence is that of Transcriptional regulator MraZ from Geobacter sulfurreducens (strain ATCC 51573 / DSM 12127 / PCA).